A 306-amino-acid chain; its full sequence is Tryptophan 2,3-dioxygenase (306 aa).

Residues 1–29 are disordered; the sequence is MQPPGDDAAPRCPFAGAHAPDAPHVPEAA. Substrate-binding positions include 75 to 79, tyrosine 137, and arginine 141; that span reads FIIQH. Heme is bound at residue histidine 264. Residue threonine 278 coordinates substrate.

Belongs to the tryptophan 2,3-dioxygenase family. Homotetramer. Heme is required as a cofactor.

The enzyme catalyses L-tryptophan + O2 = N-formyl-L-kynurenine. It participates in amino-acid degradation; L-tryptophan degradation via kynurenine pathway; L-kynurenine from L-tryptophan: step 1/2. In terms of biological role, heme-dependent dioxygenase that catalyzes the oxidative cleavage of the L-tryptophan (L-Trp) pyrrole ring and converts L-tryptophan to N-formyl-L-kynurenine. Catalyzes the oxidative cleavage of the indole moiety. The polypeptide is Tryptophan 2,3-dioxygenase (Burkholderia mallei (strain NCTC 10247)).